A 612-amino-acid polypeptide reads, in one-letter code: Threonine--tRNA ligase (612 aa).

Residues 218-509 are catalytic; sequence DHRKLGVELG…LSEHFGGNFP (292 aa). Zn(2+) is bound by residues cysteine 310, histidine 361, and histidine 486.

Belongs to the class-II aminoacyl-tRNA synthetase family. In terms of assembly, homodimer. Zn(2+) serves as cofactor.

It is found in the cytoplasm. It carries out the reaction tRNA(Thr) + L-threonine + ATP = L-threonyl-tRNA(Thr) + AMP + diphosphate + H(+). Catalyzes the attachment of threonine to tRNA(Thr) in a two-step reaction: L-threonine is first activated by ATP to form Thr-AMP and then transferred to the acceptor end of tRNA(Thr). Also edits incorrectly charged L-seryl-tRNA(Thr). This is Threonine--tRNA ligase from Helicobacter pylori (strain HPAG1).